A 475-amino-acid chain; its full sequence is Protein trichome birefringence-like 6 (475 aa).

A helical; Signal-anchor for type II membrane protein membrane pass occupies residues 14 to 34 (VLAFIITIISSAIVFFTFFSS). The short motif at 211 to 213 (GDS) is the GDS motif element. The DCXHWCLPGXXDXWN motif motif lies at 450 to 464 (DCSHWCLPGVPDTWN).

The protein belongs to the PC-esterase family. TBL subfamily.

The protein resides in the membrane. May act as a bridging protein that binds pectin and other cell wall polysaccharides. Probably involved in maintaining esterification of pectins. May be involved in the specific O-acetylation of cell wall polymers. The sequence is that of Protein trichome birefringence-like 6 (TBL6) from Arabidopsis thaliana (Mouse-ear cress).